A 937-amino-acid chain; its full sequence is Isoleucine--tRNA ligase (937 aa).

The short motif at 58–68 (PYANGSIHIGH) is the 'HIGH' region element. Glu-561 serves as a coordination point for L-isoleucyl-5'-AMP. The 'KMSKS' region motif lies at 602–606 (KMSKS). Lys-605 lines the ATP pocket. Cys-900, Cys-903, Cys-920, and Cys-923 together coordinate Zn(2+).

It belongs to the class-I aminoacyl-tRNA synthetase family. IleS type 1 subfamily. In terms of assembly, monomer. The cofactor is Zn(2+).

It localises to the cytoplasm. The enzyme catalyses tRNA(Ile) + L-isoleucine + ATP = L-isoleucyl-tRNA(Ile) + AMP + diphosphate. Its function is as follows. Catalyzes the attachment of isoleucine to tRNA(Ile). As IleRS can inadvertently accommodate and process structurally similar amino acids such as valine, to avoid such errors it has two additional distinct tRNA(Ile)-dependent editing activities. One activity is designated as 'pretransfer' editing and involves the hydrolysis of activated Val-AMP. The other activity is designated 'posttransfer' editing and involves deacylation of mischarged Val-tRNA(Ile). This chain is Isoleucine--tRNA ligase, found in Photorhabdus laumondii subsp. laumondii (strain DSM 15139 / CIP 105565 / TT01) (Photorhabdus luminescens subsp. laumondii).